The following is a 483-amino-acid chain: PAT complex subunit CCDC47 (483 aa).

Positions 1–20 (MKAFYAFCVVLLVFGSVSEA) are cleaved as a signal peptide. At 21–135 (KFDDFEDEED…PAHLQNSWES (115 aa)) the chain is on the cytoplasmic side. The tract at residues 46–119 (MEDSVTESPQ…DTSSNKNKDP (74 aa)) is disordered. Residues 60–104 (TEDDEDEATVELEGQDESQEGDFEDADTQEGDTESEPYDDEEFEG) show a composition bias toward acidic residues. Basic and acidic residues predominate over residues 105–118 (YEDKPDTSSNKNKD). The helical transmembrane segment at 136–156 (YYLEILMVTGLLAYIMNYIIG) threads the bilayer. Residues 157–483 (KNKNSRLAQA…KMKQIKVKAM (327 aa)) lie on the Lumenal side of the membrane. N-linked (GlcNAc...) asparagine glycosylation occurs at Asn178. Positions 424 to 483 (QRQEAAQSRREEKKRAEKERIMNEEDPEKQRRLEEAALRREQKKLEKKQMKMKQIKVKAM) are disordered. Residues 430-472 (QSRREEKKRAEKERIMNEEDPEKQRRLEEAALRREQKKLEKKQ) are compositionally biased toward basic and acidic residues. Positions 450-483 (PEKQRRLEEAALRREQKKLEKKQMKMKQIKVKAM) form a coiled coil. The span at 473-483 (MKMKQIKVKAM) shows a compositional bias: basic residues.

It belongs to the CCDC47 family. In terms of assembly, component of the PAT complex, composed of WDR83OS/Asterix and CCDC47. The PAT complex is part of the multi-pass translocon (MPT) complex, composed of three subcomplexes, the GEL complex (composed of RAB5IF/OPTI and TMCO1), the BOS complex (composed of NCLN/Nicalin, NOMO1 and TMEM147) and the PAT complex (composed of WDR83OS/Asterix and CCDC47). The MPT complex associates with the SEC61 complex. Interacts with VCP, HSPA5, DERL1, DERL2 and SELENOS. As to expression, in the embryo, expressed in the endodermal layer of the yolk sac and in the small intestine.

The protein localises to the endoplasmic reticulum membrane. The protein resides in the rough endoplasmic reticulum membrane. In terms of biological role, component of the multi-pass translocon (MPT) complex that mediates insertion of multi-pass membrane proteins into the lipid bilayer of membranes. The MPT complex takes over after the SEC61 complex: following membrane insertion of the first few transmembrane segments of proteins by the SEC61 complex, the MPT complex occludes the lateral gate of the SEC61 complex to promote insertion of subsequent transmembrane regions. Within the MPT complex, the PAT subcomplex sequesters any highly polar regions in the transmembrane domains away from the non-polar membrane environment until they can be buried in the interior of the fully assembled protein. Within the PAT subcomplex, CCDC47 occludes the lateral gate of the SEC61 complex. Involved in the regulation of calcium ion homeostasis in the ER. Required for proper protein degradation via the ERAD (ER-associated degradation) pathway. Has an essential role in the maintenance of ER organization during embryogenesis. The protein is PAT complex subunit CCDC47 of Mus musculus (Mouse).